Consider the following 229-residue polypeptide: Uracil-DNA glycosylase (229 aa).

The active-site Proton acceptor is Asp64.

This sequence belongs to the uracil-DNA glycosylase (UDG) superfamily. UNG family.

Its subcellular location is the cytoplasm. The catalysed reaction is Hydrolyzes single-stranded DNA or mismatched double-stranded DNA and polynucleotides, releasing free uracil.. In terms of biological role, excises uracil residues from the DNA which can arise as a result of misincorporation of dUMP residues by DNA polymerase or due to deamination of cytosine. The sequence is that of Uracil-DNA glycosylase from Escherichia fergusonii (strain ATCC 35469 / DSM 13698 / CCUG 18766 / IAM 14443 / JCM 21226 / LMG 7866 / NBRC 102419 / NCTC 12128 / CDC 0568-73).